The primary structure comprises 83 residues: Short neurotoxin D (83 aa).

The first 21 residues, 1 to 21, serve as a signal peptide directing secretion; sequence MKTLLLTLVVVTMVCLDLGYT. 4 disulfide bridges follow: Cys24/Cys45, Cys38/Cys62, Cys64/Cys75, and Cys76/Cys81.

It belongs to the three-finger toxin family. Short-chain subfamily. Type I alpha-neurotoxin sub-subfamily. In terms of tissue distribution, expressed by the venom gland.

The protein localises to the secreted. Functionally, binds to muscle nicotinic acetylcholine receptor (nAChR) and inhibit acetylcholine from binding to the receptor, thereby impairing neuromuscular transmission. The protein is Short neurotoxin D of Laticauda colubrina (Yellow-lipped sea krait).